We begin with the raw amino-acid sequence, 188 residues long: Elongation factor P (188 aa).

It belongs to the elongation factor P family.

The protein localises to the cytoplasm. It functions in the pathway protein biosynthesis; polypeptide chain elongation. Involved in peptide bond synthesis. Stimulates efficient translation and peptide-bond synthesis on native or reconstituted 70S ribosomes in vitro. Probably functions indirectly by altering the affinity of the ribosome for aminoacyl-tRNA, thus increasing their reactivity as acceptors for peptidyl transferase. In Anaplasma marginale (strain Florida), this protein is Elongation factor P.